We begin with the raw amino-acid sequence, 247 residues long: ATP synthase subunit a, chloroplastic (247 aa).

Helical transmembrane passes span Gln38–Val58, Val95–Leu115, Ile134–Thr154, Leu199–Leu219, and Gly220–Gly240.

The protein belongs to the ATPase A chain family. F-type ATPases have 2 components, CF(1) - the catalytic core - and CF(0) - the membrane proton channel. CF(1) has five subunits: alpha(3), beta(3), gamma(1), delta(1), epsilon(1). CF(0) has four main subunits: a, b, b' and c.

Its subcellular location is the plastid. It is found in the chloroplast thylakoid membrane. Functionally, key component of the proton channel; it plays a direct role in the translocation of protons across the membrane. The chain is ATP synthase subunit a, chloroplastic from Platanus occidentalis (Sycamore).